The following is a 186-amino-acid chain: Quinone reductase (186 aa).

FMN is bound by residues 13-20, 80-83, and serine 116; these read SLRKESYN and EHNR.

This sequence belongs to the SsuE family. As to quaternary structure, homotetramer. Dimer of dimers. The tetrameric configuration has a central role in chromate reductase activity. Requires FMN as cofactor.

The catalysed reaction is a quinone + NADH + H(+) = a quinol + NAD(+). The enzyme catalyses a quinone + NADPH + H(+) = a quinol + NADP(+). It carries out the reaction Cr(6+) + 2 NADH + O2 = Cr(3+) + superoxide + 2 NAD(+) + 2 H(+). It catalyses the reaction Cr(6+) + 2 NADPH + O2 = Cr(3+) + superoxide + 2 NADP(+) + 2 H(+). Non-competitively inhibited by sulfate. Catalyzes the reduction of quinones. Acts by simultaneous two-electron transfer, avoiding formation of highly reactive semiquinone intermediates and producing quinols that promote tolerance of H(2)O(2). Quinone reduction is probably the primary biological role of ChrR. Can also reduce toxic chromate to insoluble and less toxic Cr(3+). Catalyzes the transfer of three electrons to Cr(6+) producing Cr(3+) and one electron to molecular oxygen. This reaction produces transiently a minimal amount of the toxic Cr(5+) species and reactive oxygen species (ROS). Chromate reduction protects the cell against chromate toxicity, but is likely a secondary activity. The polypeptide is Quinone reductase (chrR) (Pseudomonas putida (Arthrobacter siderocapsulatus)).